We begin with the raw amino-acid sequence, 233 residues long: MILIASPFSLAHLEYLNTWHANIKNIAQQHGLDIKVAIVVSKTHLNNFLPFSTALNIECITFPGCGIKEIDLLWARIKLFQHYCAIGARLLWLVSADIRPSVSTWPAIADSLKKGADAVVVPYPSQWNNLIPTVIKEIVVHQKKCLVAVDAHHLDTDTQIVGAGMGCIVLTLKALMVRLSIGKQPIKILWPDLHGTAEGIPLEGVEVGWFLNAYAHKLNIRCLGAEHIAQHLN.

The protein belongs to the asfivirus H233R family.

This is an uncharacterized protein from African swine fever virus (isolate Tick/Malawi/Lil 20-1/1983) (ASFV).